Reading from the N-terminus, the 467-residue chain is MATEYALRMGDGKRIYLTKEKIIAEIEDGTANAADLGEIPALNANEMEKLAEILMMPGKTVSVEQGMEVPVTHDIGTIRLDGDQGNSGVGIPSSRLVGCMTHERAFGADTMELGHIDYSFKPVKPVVSNECQAMEVCQQNMIIPLFYGAMPNMGLYYTPDGPFENPGDLMKAFKIPEAWESMEHAAEHLTRDTVWVMQKLFASGADGVNFDTTGAAGDGDMYGTLHAIEALRKEFPDMYIEAGMAGECVLGMHGNLQYDGVTLAGLWPHQQAPLVAKAGANVFGPVCNTNTSKTSAWNLARAVTFMKAAVEASPIPCHVDMGMGVGGIPMLETPPIDAVTRASKAMVEIAGVDGIOIGVGDPMGMPIAHIMASGMTGMRAAGDLVARMEFSKNMRIGEAKEYVAKKLGVDQMDLVDEHVMRELREELDIGIITSVPGAAKGIAAKMNIEKLLDIKINSCNLFRKQIA.

Pyl-356 is a non-standard amino acid (pyrrolysine).

It belongs to the dimethylamine methyltransferase family.

The catalysed reaction is Co(I)-[dimethylamine-specific corrinoid protein] + dimethylamine + H(+) = methyl-Co(III)-[dimethylamine-specific corrinoid protein] + methylamine. It functions in the pathway one-carbon metabolism; methanogenesis from dimethylamine. In terms of biological role, catalyzes the transfer of a methyl group from dimethylamine to the corrinoid cofactor of MtbC. This is Dimethylamine methyltransferase MtbB1 (mtbB1) from Methanosarcina barkeri (strain Fusaro / DSM 804).